The primary structure comprises 348 residues: Erlin-1 (348 aa).

At 1 to 7 (MNMTQAR) the chain is on the cytoplasmic side. The chain crosses the membrane as a helical span at residues 8–28 (LLVAAVVGLVAILLYASIHKI). The Lumenal segment spans residues 29 to 348 (EEGHLAVYYR…SPIQNKENAG (320 aa)). A glycan (N-linked (GlcNAc...) asparagine) is linked at asparagine 108. Residue lysine 269 is modified to N6-acetyllysine. The segment covering 318 to 336 (DGRTGREDSLPPEEAREPS) has biased composition (basic and acidic residues). The segment at 318–348 (DGRTGREDSLPPEEAREPSGESPIQNKENAG) is disordered. The span at 339–348 (SPIQNKENAG) shows a compositional bias: polar residues.

Belongs to the band 7/mec-2 family. As to quaternary structure, forms a heteromeric complex with ERLIN2. In complex with ERLIN2, interacts with RNF170. Interacts with AMFR and SYVN1. In terms of processing, deubiquitinated by USP25; leading to stabilization.

It localises to the endoplasmic reticulum membrane. Functionally, component of the ERLIN1/ERLIN2 complex which mediates the endoplasmic reticulum-associated degradation (ERAD) of inositol 1,4,5-trisphosphate receptors (IP3Rs). Involved in regulation of cellular cholesterol homeostasis by regulation the SREBP signaling pathway. Binds cholesterol and may promote ER retention of the SCAP-SREBF complex. This chain is Erlin-1, found in Mus musculus (Mouse).